Consider the following 674-residue polypeptide: Slender lobes-like protein (674 aa).

3 disordered regions span residues 65–137 (LEKS…NASK), 168–321 (NELN…TIKK), and 352–382 (QKSR…RVEV). The segment covering 73-97 (PKKKVQTKKHLPPVRKKDSVKRRRI) has biased composition (basic residues). Over residues 127-137 (NQSNCSSNASK) the composition is skewed to polar residues. Residues 216 to 228 (VDSDDEEEQDQDQ) are compositionally biased toward acidic residues. Residues 233 to 245 (KPAESENHSEIKK) show a composition bias toward basic and acidic residues. Ser-248 is modified (phosphoserine). A compositionally biased stretch (basic and acidic residues) spans 272-312 (EDPKEAGKNEESDKDKPAENGKSDKDKQAETEMSDEDKPSE). Phosphoserine is present on residues Ser-358 and Ser-391. Disordered stretches follow at residues 395–585 (MVAE…AGYV) and 618–659 (KYFR…NSAK). Over residues 400–410 (KRQKNKRKRLS) the composition is skewed to basic residues. Ser-414 carries the phosphoserine modification. Positions 548 to 558 (AKQKKKGKKKQ) are enriched in basic residues.

This Drosophila melanogaster (Fruit fly) protein is Slender lobes-like protein.